A 536-amino-acid chain; its full sequence is Arylsulfatase (536 aa).

Asp13, Asp14, and Cys51 together coordinate Ca(2+). The active-site Nucleophile is the Cys51. Cys51 carries the post-translational modification 3-oxoalanine (Cys). His115 is an active-site residue. Residues Asp317 and Asn318 each contribute to the Ca(2+) site.

Belongs to the sulfatase family. As to quaternary structure, monomer. Ca(2+) is required as a cofactor. In terms of processing, the conversion to 3-oxoalanine (also known as C-formylglycine, FGly), of a serine or cysteine residue in prokaryotes and of a cysteine residue in eukaryotes, is critical for catalytic activity.

The protein resides in the cytoplasm. The catalysed reaction is an aryl sulfate + H2O = a phenol + sulfate + H(+). Functionally, hydrolyzes the bond between sulfate and the aromatic ring in a compound such as 4-nitrocatechol sulfate. This chain is Arylsulfatase (atsA), found in Pseudomonas aeruginosa (strain ATCC 15692 / DSM 22644 / CIP 104116 / JCM 14847 / LMG 12228 / 1C / PRS 101 / PAO1).